Consider the following 400-residue polypeptide: Keratin, type I cytoskeletal 19 (400 aa).

The head stretch occupies residues 1-79 (MTSYSYRQSS…TASDGLLAGN (79 aa)). Arg7 bears the Omega-N-methylarginine mark. Phosphoserine occurs at positions 14 and 22. Arg24 carries the asymmetric dimethylarginine; alternate modification. Arg24 is subject to Omega-N-methylarginine; alternate. An Omega-N-methylarginine modification is found at Arg32. Phosphoserine occurs at positions 35 and 40. 2 positions are modified to omega-N-methylarginine: Arg43 and Arg51. 2 positions are modified to phosphoserine: Ser57 and Ser72. The interval 80 to 115 (EKLTMQNLNDRLASYLDKVRALEAANGELEVKIRDW) is coil 1A. The region spanning 80-391 (EKLTMQNLND…SLLEGQEDHY (312 aa)) is the IF rod domain. The interval 116 to 133 (YQKQGPGPSRDYSHYYTT) is linker 1. A coil 1B region spans residues 134-225 (IQDLRDKILG…KNHEEEISTL (92 aa)). Residues 226-248 (RGQVGGQVSVEVDSAPGTDLAKI) form a linker 12 region. The necessary for interaction with PNN stretch occupies residues 244–390 (DLAKILSDMR…RSLLEGQEDH (147 aa)). A coil 2 region spans residues 249-387 (LSDMRSQYEV…ATYRSLLEGQ (139 aa)). Residue Thr323 is modified to Phosphothreonine. The tract at residues 388 to 400 (EDHYNNLSASKVL) is rod-like helical tail. At Tyr391 the chain carries Phosphotyrosine. 2 positions are modified to phosphoserine: Ser395 and Ser397.

It belongs to the intermediate filament family. As to quaternary structure, heterotetramer of two type I and two type II keratins. Interacts with PNN and the actin-binding domain of DMD. Interacts with HCV core protein. In terms of assembly, (Microbial infection) Interacts with hepatitis C virus/HCV core protein. In terms of tissue distribution, expressed in a defined zone of basal keratinocytes in the deep outer root sheath of hair follicles. Also observed in sweat gland and mammary gland ductal and secretory cells, bile ducts, gastrointestinal tract, bladder urothelium, oral epithelia, esophagus, ectocervical epithelium (at protein level). Expressed in epidermal basal cells, in nipple epidermis and a defined region of the hair follicle. Also seen in a subset of vascular wall cells in both the veins and artery of human umbilical cord, and in umbilical cord vascular smooth muscle. Observed in muscle fibers accumulating in the costameres of myoplasm at the sarcolemma in structures that contain dystrophin and spectrin.

Functionally, involved in the organization of myofibers. Together with KRT8, helps to link the contractile apparatus to dystrophin at the costameres of striated muscle. The polypeptide is Keratin, type I cytoskeletal 19 (KRT19) (Homo sapiens (Human)).